A 145-amino-acid chain; its full sequence is Protein cornichon homolog 1 (145 aa).

3 consecutive transmembrane segments (helical) span residues phenylalanine 5–isoleucine 25, isoleucine 57–alanine 77, and leucine 116–alanine 136.

The protein belongs to the cornichon family. Interacts with glr-1. As to expression, widely expressed in the nervous system including in the AVA interneurons.

The protein localises to the endoplasmic reticulum membrane. It is found in the synapse. Its subcellular location is the cell projection. It localises to the dendrite. Functionally, negatively regulates export of glr-1 from the endoplasmic reticulum to synapses. The protein is Protein cornichon homolog 1 of Caenorhabditis elegans.